The sequence spans 273 residues: HTH-type transcriptional activator RhaS (273 aa).

The HTH araC/xylS-type domain occupies 174–272 (YQLLDWLQNN…SQSPRDLRSQ (99 aa)). DNA-binding regions (H-T-H motif) lie at residues 191 to 212 (PELA…KNKT) and 239 to 262 (VTDI…KREF).

As to quaternary structure, binds DNA as a dimer.

The protein resides in the cytoplasm. Functionally, activates expression of the rhaBAD and rhaT operons. This chain is HTH-type transcriptional activator RhaS, found in Yersinia pestis bv. Antiqua (strain Angola).